The following is a 241-amino-acid chain: DNA repair protein RecO (241 aa).

It belongs to the RecO family.

Functionally, involved in DNA repair and RecF pathway recombination. The sequence is that of DNA repair protein RecO from Yersinia enterocolitica serotype O:8 / biotype 1B (strain NCTC 13174 / 8081).